The following is an 86-amino-acid chain: Small ribosomal subunit protein bS18 (86 aa).

It belongs to the bacterial ribosomal protein bS18 family. As to quaternary structure, part of the 30S ribosomal subunit. Forms a tight heterodimer with protein bS6.

Its function is as follows. Binds as a heterodimer with protein bS6 to the central domain of the 16S rRNA, where it helps stabilize the platform of the 30S subunit. In Maridesulfovibrio salexigens (strain ATCC 14822 / DSM 2638 / NCIMB 8403 / VKM B-1763) (Desulfovibrio salexigens), this protein is Small ribosomal subunit protein bS18.